Reading from the N-terminus, the 521-residue chain is Probable tRNA (uracil-O(2)-)-methyltransferase (521 aa).

The protein belongs to the TRM44 family.

The protein localises to the cytoplasm. It catalyses the reaction uridine(44) in tRNA(Ser) + S-adenosyl-L-methionine = 2'-O-methyluridine(44) in tRNA(Ser) + S-adenosyl-L-homocysteine + H(+). Its function is as follows. Probable adenosyl-L-methionine (AdoMet)-dependent tRNA (uracil-O(2)-)-methyltransferase. The sequence is that of Probable tRNA (uracil-O(2)-)-methyltransferase (trmt44) from Drosophila melanogaster (Fruit fly).